We begin with the raw amino-acid sequence, 457 residues long: Autophagy-related protein 14 (457 aa).

Positions 31–109 (RIENVMALIE…TRRAALSRRK (79 aa)) form a coiled coil. Disordered stretches follow at residues 54-73 (ETNA…QRTA), 252-274 (PSQA…VSRP), and 433-457 (NKNL…VKNR). Over residues 253–266 (SQASVSSPSSTTDT) the composition is skewed to low complexity.

This sequence belongs to the ATG14 family. As to quaternary structure, component of the autophagy-specific VPS34 PI3-kinase complex I.

The protein localises to the preautophagosomal structure membrane. Its subcellular location is the vacuole membrane. In terms of biological role, required for cytoplasm to vacuole transport (Cvt) and autophagy as a part of the autophagy-specific VPS34 PI3-kinase complex I. This complex is essential to recruit the ATG8-phosphatidylinositol conjugate and the ATG12-ATG5 conjugate to the pre-autophagosomal structure. ATG14 mediates the specific binding of the VPS34 PI3-kinase complex I to the preautophagosomal structure (PAS). Autophagy is required for proper vegetative growth, asexual/sexual reproduction, and full virulence. Autophagy is particularly involved in the biosynthesis of deoxynivalenol (DON), an important virulence determinant. This chain is Autophagy-related protein 14, found in Gibberella zeae (strain ATCC MYA-4620 / CBS 123657 / FGSC 9075 / NRRL 31084 / PH-1) (Wheat head blight fungus).